The sequence spans 226 residues: Ribose-5-phosphate isomerase A (226 aa).

Residues Thr-26–Thr-29, Asp-82–Asp-85, and Lys-95–Gly-98 contribute to the substrate site. Glu-104 functions as the Proton acceptor in the catalytic mechanism. Residue Lys-122 coordinates substrate.

This sequence belongs to the ribose 5-phosphate isomerase family. As to quaternary structure, homodimer.

It carries out the reaction aldehydo-D-ribose 5-phosphate = D-ribulose 5-phosphate. It participates in carbohydrate degradation; pentose phosphate pathway; D-ribose 5-phosphate from D-ribulose 5-phosphate (non-oxidative stage): step 1/1. In terms of biological role, catalyzes the reversible conversion of ribose-5-phosphate to ribulose 5-phosphate. The sequence is that of Ribose-5-phosphate isomerase A from Streptococcus thermophilus (strain CNRZ 1066).